Reading from the N-terminus, the 632-residue chain is Extracellular metalloproteinase 5 (632 aa).

The first 20 residues, 1 to 20 (MHGLLLAAGLLSLPLHVLAH), serve as a signal peptide directing secretion. The propeptide occupies 21-244 (PQPGTSLAGR…HNVVDYVSHA (224 aa)). Asparagine 284 is a glycosylation site (N-linked (GlcNAc...) asparagine). Histidine 427 is a Zn(2+) binding site. Glutamate 428 is an active-site residue. Residue histidine 431 coordinates Zn(2+). N-linked (GlcNAc...) asparagine glycans are attached at residues asparagine 591 and asparagine 620.

The protein belongs to the peptidase M36 family. It depends on Zn(2+) as a cofactor.

The protein resides in the secreted. Functionally, secreted metalloproteinase probably acting as a virulence factor. This Arthroderma otae (strain ATCC MYA-4605 / CBS 113480) (Microsporum canis) protein is Extracellular metalloproteinase 5 (MEP5).